Here is a 287-residue protein sequence, read N- to C-terminus: Ribonuclease HII (287 aa).

Residues 61–287 (ALQIGVDEAG…FAPVRKALES (227 aa)) enclose the RNase H type-2 domain. 3 residues coordinate a divalent metal cation: Asp-67, Glu-68, and Asp-186.

The protein belongs to the RNase HII family. Mn(2+) is required as a cofactor. Mg(2+) serves as cofactor.

The protein localises to the cytoplasm. It catalyses the reaction Endonucleolytic cleavage to 5'-phosphomonoester.. Functionally, endonuclease that specifically degrades the RNA of RNA-DNA hybrids. The chain is Ribonuclease HII from Psychrobacter arcticus (strain DSM 17307 / VKM B-2377 / 273-4).